The sequence spans 580 residues: uncharacterized protein (580 aa).

Positions 1–44 (MSESSVNADTPKNTNDVLNGAYQSATTEPEGQYRSATDNPSLYQ) are enriched in polar residues. A disordered region spans residues 1–45 (MSESSVNADTPKNTNDVLNGAYQSATTEPEGQYRSATDNPSLYQV). At Ser-99 the chain carries Phosphoserine. 12 helical membrane passes run 143–163 (IYAY…PASA), 177–197 (LLNV…WAPM), 207–227 (LYIG…AQDI), 235–255 (FFGG…FADM), 265–285 (ITIF…VGGF), 295–315 (WTEY…YLFC), 370–390 (PIVF…YLLL), 405–425 (LGVS…GCGI), 450–470 (LPPM…LAWS), 476–496 (VHWI…LLIF), 511–533 (AASV…PLFA), and 546–566 (GSLL…FFFF).

This sequence belongs to the major facilitator superfamily. CAR1 family.

It localises to the membrane. This is an uncharacterized protein from Schizosaccharomyces pombe (strain 972 / ATCC 24843) (Fission yeast).